The sequence spans 330 residues: Lipoyl synthase (330 aa).

[4Fe-4S] cluster contacts are provided by Cys-77, Cys-82, Cys-88, Cys-103, Cys-107, Cys-110, and Ser-317. In terms of domain architecture, Radical SAM core spans 89 to 306 (FNHGTATFMI…RSEAERMGFE (218 aa)).

It belongs to the radical SAM superfamily. Lipoyl synthase family. It depends on [4Fe-4S] cluster as a cofactor.

The protein resides in the cytoplasm. It carries out the reaction [[Fe-S] cluster scaffold protein carrying a second [4Fe-4S](2+) cluster] + N(6)-octanoyl-L-lysyl-[protein] + 2 oxidized [2Fe-2S]-[ferredoxin] + 2 S-adenosyl-L-methionine + 4 H(+) = [[Fe-S] cluster scaffold protein] + N(6)-[(R)-dihydrolipoyl]-L-lysyl-[protein] + 4 Fe(3+) + 2 hydrogen sulfide + 2 5'-deoxyadenosine + 2 L-methionine + 2 reduced [2Fe-2S]-[ferredoxin]. The protein operates within protein modification; protein lipoylation via endogenous pathway; protein N(6)-(lipoyl)lysine from octanoyl-[acyl-carrier-protein]: step 2/2. In terms of biological role, catalyzes the radical-mediated insertion of two sulfur atoms into the C-6 and C-8 positions of the octanoyl moiety bound to the lipoyl domains of lipoate-dependent enzymes, thereby converting the octanoylated domains into lipoylated derivatives. The polypeptide is Lipoyl synthase (Actinobacillus pleuropneumoniae serotype 5b (strain L20)).